The chain runs to 149 residues: Large ribosomal subunit protein eL24B (149 aa).

A Phosphoserine modification is found at S50. The segment at 96–149 is disordered; it reads QRPEVRAAARAAALKQRKDKRAASESEKKAIKAKSAASSARGQAIKNAKVAARR. A compositionally biased stretch (basic and acidic residues) spans 116–125; it reads RAASESEKKA.

The protein belongs to the eukaryotic ribosomal protein eL24 family. Component of the large ribosomal subunit (LSU). Mature yeast ribosomes consist of a small (40S) and a large (60S) subunit. The 40S small subunit contains 1 molecule of ribosomal RNA (18S rRNA) and at least 33 different proteins. The large 60S subunit contains 3 rRNA molecules (25S, 5.8S and 5S rRNA) and at least 46 different proteins.

The protein resides in the cytoplasm. Its function is as follows. Component of the ribosome, a large ribonucleoprotein complex responsible for the synthesis of proteins in the cell. The small ribosomal subunit (SSU) binds messenger RNAs (mRNAs) and translates the encoded message by selecting cognate aminoacyl-transfer RNA (tRNA) molecules. The large subunit (LSU) contains the ribosomal catalytic site termed the peptidyl transferase center (PTC), which catalyzes the formation of peptide bonds, thereby polymerizing the amino acids delivered by tRNAs into a polypeptide chain. The nascent polypeptides leave the ribosome through a tunnel in the LSU and interact with protein factors that function in enzymatic processing, targeting, and the membrane insertion of nascent chains at the exit of the ribosomal tunnel. The protein is Large ribosomal subunit protein eL24B (rpl2402) of Schizosaccharomyces pombe (strain 972 / ATCC 24843) (Fission yeast).